The sequence spans 636 residues: MELKTMPQNGANNGNPQGNTSNNNNTNDSSNSNSNNNNKTERTNWSNGLEFLMSCISVSVGLGNIWRFPFTAYENGGGAFLIPYIIVLFMIGKPMYYLEMIMGQFTSQGTVKIWSICPSFLGVGYGQAFGTICIISYYSSLLALTLYYLAVSFQADLPWSTCRDTWINCVNSRPAEYIETMMTNGSSALTRATDTPAKLQSSSELYFLDVVINEKTDISDGVGNPDWKLTIALFVSWIVIFLVIMRGVKSSGKAAYFLALFPYVVLFTLLGRAVTLEGAVDGIIFFLEPQWGELLNPTVWKEAVVQCFFSLAVGSGPIIMFSSYNRFDHPIYRDAMIVTTLDTLTSLLGGITIFAILGNLAHNLKVENIRDVVRSGTGLAFISYPDAISKFNAVPQLFSALFFFMLFVLGIGSIVALQSTIVTIICDQFKWKYWKVALVTSICGFLMGLVYVTPGGQWILTLVDFYGGTYVVFILAIFELVGIAWIYGVSNFCDDIEFMSNKRVSLYWRACWLIFTPIMMIVIFIYSMVTITPIKYSDIYFPVAGDVAGWLLFAIGASQFPLWGWWYVHNHRTGSIAKSFVDSLKPSQKWGPADPETRRNWLLFKSDLAAKRAVQAKSDKMGFFRQKLYNMCGRST.

The disordered stretch occupies residues 1 to 40 (MELKTMPQNGANNGNPQGNTSNNNNTNDSSNSNSNNNNKT). Residues 1–50 (MELKTMPQNGANNGNPQGNTSNNNNTNDSSNSNSNNNNKTERTNWSNGLE) are Cytoplasmic-facing. A compositionally biased stretch (low complexity) spans 7-40 (PQNGANNGNPQGNTSNNNNTNDSSNSNSNNNNKT). Transmembrane regions (helical) follow at residues 51–71 (FLMS…FPFT), 78–98 (GAFL…MYYL), and 131–151 (TICI…YLAV). N-linked (GlcNAc...) asparagine glycosylation occurs at asparagine 184. 9 consecutive transmembrane segments (helical) span residues 225–245 (PDWK…LVIM), 254–274 (AAYF…GRAV), 303–323 (AVVQ…MFSS), 337–357 (IVTT…FAIL), 397–417 (LFSA…IVAL), 436–456 (VALV…TPGG), 469–489 (TYVV…IYGV), 511–531 (CWLI…MVTI), and 547–567 (VAGW…GWWY).

It belongs to the sodium:neurotransmitter symporter (SNF) (TC 2.A.22) family.

It localises to the membrane. In terms of biological role, unusual broad substrate spectrum amino acid:sodium cotransporter that promotes absorption of the D isomers of essential amino acids. Neutral amino acids are the preferred substrates, especially methionine and phenylalanine. The sequence is that of Sodium-dependent nutrient amino acid transporter 1 from Drosophila grimshawi (Hawaiian fruit fly).